The primary structure comprises 280 residues: Gem-associated protein 2 (280 aa).

A may play a minor inhibitory role in snRNA binding to 5Sm (SNRPD1, SNRPD2, SNRPE, SNRPF and SNRPG) during snRNP assembly by inserting into the RNA binding pocket of 5Sm region spans residues 1 to 39 (MRRAELAGLKTMAWVPAESAVEELMPRLLPVEPCDLTEG). 2 positions are modified to phosphoserine: Ser81 and Ser166.

Belongs to the gemin-2 family. As to quaternary structure, monomer. Part of the core SMN complex that contains SMN1, GEMIN2/SIP1, DDX20/GEMIN3, GEMIN4, GEMIN5, GEMIN6, GEMIN7, GEMIN8 and STRAP/UNRIP. Part of the SMN-Sm complex that contains SMN1, GEMIN2/SIP1, DDX20/GEMIN3, GEMIN4, GEMIN5, GEMIN6, GEMIN7, GEMIN8, STRAP/UNRIP and the Sm proteins SNRPB, SNRPD1, SNRPD2, SNRPD3, SNRPE, SNRPF and SNRPG. Interacts with GEMIN5; the interaction is direct. Interacts (via C-terminus) with SMN1; the interaction is direct. Interacts with SNRPD1; the interaction is direct. Interacts with SNRPD2; the interaction is direct. Interacts (via N-terminus) with SNRPF; the interaction is direct. Interacts (via N-terminus) with SNRPE; the interaction is direct. Interacts (via N-terminus) with SNRPG; the interaction is direct.

It localises to the nucleus. Its subcellular location is the gem. The protein localises to the cytoplasm. Functionally, the SMN complex catalyzes the assembly of small nuclear ribonucleoproteins (snRNPs), the building blocks of the spliceosome, and thereby plays an important role in the splicing of cellular pre-mRNAs. Most spliceosomal snRNPs contain a common set of Sm proteins SNRPB, SNRPD1, SNRPD2, SNRPD3, SNRPE, SNRPF and SNRPG that assemble in a heptameric protein ring on the Sm site of the small nuclear RNA to form the core snRNP (Sm core). In the cytosol, the Sm proteins SNRPD1, SNRPD2, SNRPE, SNRPF and SNRPG (5Sm) are trapped in an inactive 6S pICln-Sm complex by the chaperone CLNS1A that controls the assembly of the core snRNP. To assemble core snRNPs, the SMN complex accepts the trapped 5Sm proteins from CLNS1A. Binding of snRNA inside 5Sm ultimately triggers eviction of the SMN complex, thereby allowing binding of SNRPD3 and SNRPB to complete assembly of the core snRNP. Within the SMN complex, GEMIN2 constrains the conformation of 5Sm, thereby promoting 5Sm binding to snRNA containing the snRNP code (a nonameric Sm site and a 3'-adjacent stem-loop), thus preventing progression of assembly until a cognate substrate is bound. The protein is Gem-associated protein 2 of Homo sapiens (Human).